A 307-amino-acid chain; its full sequence is Cilia-and flagella-associated protein 96 (307 aa).

Disordered stretches follow at residues 73–102 (YSDPFKQRRQHRMQQSKKNLGKPFLPSSGE) and 218–279 (HSQK…GPKT).

Belongs to the CFAP96 family.

The protein resides in the cytoplasm. Its subcellular location is the cytoskeleton. It localises to the microtubule organizing center. The protein localises to the centrosome. The protein is Cilia-and flagella-associated protein 96 (cfap96.L) of Xenopus laevis (African clawed frog).